The primary structure comprises 223 residues: DNA mismatch repair protein MutH (223 aa).

Belongs to the MutH family.

The protein resides in the cytoplasm. In terms of biological role, sequence-specific endonuclease that cleaves unmethylated GATC sequences. It is involved in DNA mismatch repair. This chain is DNA mismatch repair protein MutH, found in Haemophilus influenzae (strain PittEE).